A 246-amino-acid chain; its full sequence is uncharacterized protein (246 aa).

A coiled-coil region spans residues 204–243 (TTKLKKLEKEIHELPYMLINGKITYEEYKKRIREIEKEIG).

This is an uncharacterized protein from Aquifex aeolicus (strain VF5).